Reading from the N-terminus, the 366-residue chain is MQYINIANRGVKSLSPYQAGKPIEELEREIGISNIVKLASNENPFGFPESAKKAIFEQLDKLTRYPDANGFELKQTIAKKFGVQPNQITLGNGSNDLLELFAHTFATEGDEIIYSQYAFIVYPLVTKAINAIAKEIPAKNWGHDLQGFLTALSDKTKLIYIANPNNPTGNFLTSQEIEDFLAKVPENVIVVLDEAYTEFTRSEERVDSFSLLKKYSNLIISRTLSKAYGLAGLRIGYAVSNPEIADLLNRVRQPFNCNSLALTAAVAVMNDDEFIEKVAENNRIEMRRYEDFCQKNQLDYIPSKGNFITIDFKQPAAPIYDALLREGVIVRPIAGYGMPNHLRISIGLPEENDKFFTALSKVLKFA.

Position 226 is an N6-(pyridoxal phosphate)lysine (K226).

The protein belongs to the class-II pyridoxal-phosphate-dependent aminotransferase family. Histidinol-phosphate aminotransferase subfamily. Homodimer. Requires pyridoxal 5'-phosphate as cofactor.

It catalyses the reaction L-histidinol phosphate + 2-oxoglutarate = 3-(imidazol-4-yl)-2-oxopropyl phosphate + L-glutamate. Its pathway is amino-acid biosynthesis; L-histidine biosynthesis; L-histidine from 5-phospho-alpha-D-ribose 1-diphosphate: step 7/9. The sequence is that of Histidinol-phosphate aminotransferase 2 from Haemophilus influenzae (strain 86-028NP).